The primary structure comprises 304 residues: Ribosomal RNA small subunit methyltransferase H (304 aa).

Residues 37 to 39 (GGH), aspartate 57, phenylalanine 79, aspartate 100, and histidine 107 each bind S-adenosyl-L-methionine.

It belongs to the methyltransferase superfamily. RsmH family.

The protein resides in the cytoplasm. The catalysed reaction is cytidine(1402) in 16S rRNA + S-adenosyl-L-methionine = N(4)-methylcytidine(1402) in 16S rRNA + S-adenosyl-L-homocysteine + H(+). In terms of biological role, specifically methylates the N4 position of cytidine in position 1402 (C1402) of 16S rRNA. The chain is Ribosomal RNA small subunit methyltransferase H from Phocaeicola vulgatus (strain ATCC 8482 / DSM 1447 / JCM 5826 / CCUG 4940 / NBRC 14291 / NCTC 11154) (Bacteroides vulgatus).